A 190-amino-acid chain; its full sequence is Nucleoside triphosphate pyrophosphatase (190 aa).

The active-site Proton acceptor is the aspartate 69.

This sequence belongs to the Maf family. A divalent metal cation is required as a cofactor.

Its subcellular location is the cytoplasm. The enzyme catalyses a ribonucleoside 5'-triphosphate + H2O = a ribonucleoside 5'-phosphate + diphosphate + H(+). The catalysed reaction is a 2'-deoxyribonucleoside 5'-triphosphate + H2O = a 2'-deoxyribonucleoside 5'-phosphate + diphosphate + H(+). In terms of biological role, nucleoside triphosphate pyrophosphatase. May have a dual role in cell division arrest and in preventing the incorporation of modified nucleotides into cellular nucleic acids. The sequence is that of Nucleoside triphosphate pyrophosphatase from Helicobacter pylori (strain P12).